The primary structure comprises 209 residues: NAD(P)H dehydrogenase (quinone) (209 aa).

The region spanning 4-199 (VNIIFHSVHA…EMARYQGRHV (196 aa)) is the Flavodoxin-like domain. FMN-binding positions include 10–15 (SVHAHI) and 87–89 (TRY). Substrate is bound at residue tryptophan 107. FMN is bound by residues 122-128 (SSGTQHG) and histidine 143.

It belongs to the WrbA family. Requires FMN as cofactor.

It carries out the reaction a quinone + NADH + H(+) = a quinol + NAD(+). It catalyses the reaction a quinone + NADPH + H(+) = a quinol + NADP(+). This is NAD(P)H dehydrogenase (quinone) from Methanosarcina mazei (strain ATCC BAA-159 / DSM 3647 / Goe1 / Go1 / JCM 11833 / OCM 88) (Methanosarcina frisia).